The following is a 445-amino-acid chain: MSTILESLPTGQKVGIAFSGGLDTSAALHWMKLKGAVPYAYTANLGQPDEDDYDAIPKRAIEYGAAGARLIDCRAQLVAEGIAALQSGAFHITTAGVTYFNTTPIGRAVTGTMLVAAMKEDGVNIWGDGSTYKGNDIERFYRYGLLVNPDLKIYKPWLDQTFIDELGGRAEMSEFMNQAGFAYKMSAEKAYSTDSNLLGATHEAKDLESLESGIKIVNPIMGVAFWRDDVKIAAEEVTVRFEAGQPVALNGVEFNDQVELLLEANRIGGRHGLGMSDQIENRIIEAKSRGIYEAPGLALLYIAYERLVTGIHNEDTIEQYRENGRRLGRLLYQGRWFDPQAIMLRETAQRWVARAITGEVKIELRRGNDYSILSTKSPNLTYQPERLSMEKVASTFSPRDRIGQLTMRNLDITDTRDKLRVYSQVGLLTPGEASALPQIKGDGDK.

ATP-binding positions include 17–25 (AFSGGLDTS) and A43. Y99 contacts L-citrulline. Residues G129 and T131 each contribute to the ATP site. T131, N135, and D136 together coordinate L-aspartate. Residue N135 coordinates L-citrulline. D136 contributes to the ATP binding site. R139 and S192 together coordinate L-citrulline. D194 is a binding site for ATP. Residues T201, E203, and E280 each coordinate L-citrulline.

The protein belongs to the argininosuccinate synthase family. Type 2 subfamily. As to quaternary structure, homotetramer.

The protein resides in the cytoplasm. The enzyme catalyses L-citrulline + L-aspartate + ATP = 2-(N(omega)-L-arginino)succinate + AMP + diphosphate + H(+). It participates in amino-acid biosynthesis; L-arginine biosynthesis; L-arginine from L-ornithine and carbamoyl phosphate: step 2/3. This is Argininosuccinate synthase from Burkholderia cenocepacia (strain ATCC BAA-245 / DSM 16553 / LMG 16656 / NCTC 13227 / J2315 / CF5610) (Burkholderia cepacia (strain J2315)).